Here is a 236-residue protein sequence, read N- to C-terminus: (5-formylfuran-3-yl)methyl phosphate synthase (236 aa).

Residue lysine 27 is the Schiff-base intermediate with substrate of the active site. Lysine 85 acts as the Proton acceptor in catalysis.

Belongs to the MfnB family.

It carries out the reaction 2 D-glyceraldehyde 3-phosphate = 4-(hydroxymethyl)-2-furancarboxaldehyde phosphate + phosphate + 2 H2O. Its pathway is cofactor biosynthesis; methanofuran biosynthesis. Catalyzes the formation of 4-(hydroxymethyl)-2-furancarboxaldehyde phosphate (4-HFC-P) from two molecules of glyceraldehyde-3-P (GA-3-P). The protein is (5-formylfuran-3-yl)methyl phosphate synthase of Methanococcus maripaludis (strain C7 / ATCC BAA-1331).